Reading from the N-terminus, the 267-residue chain is Low affinity immunoglobulin gamma Fc region receptor III (267 aa).

The first 36 residues, 1–36 (MTLETQMFQNAHSGSQWLLPPLTMLLLFAFADRQTA), serve as a signal peptide directing secretion. The Extracellular segment spans residues 37–221 (NLPKAVVKRD…STSSLVWFHA (185 aa)). Ig-like C2-type domains are found at residues 39 to 121 (PKAV…EVIS) and 122 to 204 (DWLL…VTIT). 2 cysteine pairs are disulfide-bonded: Cys-62–Cys-104 and Cys-143–Cys-187. Residues Asn-70, Asn-78, Asn-97, Asn-171, and Asn-178 are each glycosylated (N-linked (GlcNAc...) asparagine). Residues 222-241 (AFCLVMCLLFAVDTGLYFCV) traverse the membrane as a helical segment. The Cytoplasmic segment spans residues 242–267 (RRNLQTSGEDWRKSLSVGKYKAPQDK).

In terms of assembly, may form multisubunit complex with other heteroproteins. This association is required for efficient cell-surface expression. Does not associate with CD3 zeta. As to expression, expressed on natural killer cells and macrophages.

The protein resides in the cell membrane. Receptor for the Fc region of complexed immunoglobulins gamma. Low affinity receptor which binds to IgG1, IgG2a and IgG2b. Mediates neutrophil activation by IgG complexes redundantly with Fcgr4. The polypeptide is Low affinity immunoglobulin gamma Fc region receptor III (Fcgr3) (Rattus norvegicus (Rat)).